The primary structure comprises 479 residues: Kynurenine 3-monooxygenase (479 aa).

It belongs to the aromatic-ring hydroxylase family. KMO subfamily. FAD is required as a cofactor.

It is found in the mitochondrion outer membrane. It catalyses the reaction L-kynurenine + NADPH + O2 + H(+) = 3-hydroxy-L-kynurenine + NADP(+) + H2O. It functions in the pathway cofactor biosynthesis; NAD(+) biosynthesis; quinolinate from L-kynurenine: step 1/3. Functionally, catalyzes the hydroxylation of L-kynurenine (L-Kyn) to form 3-hydroxy-L-kynurenine (L-3OHKyn). Required for synthesis of quinolinic acid. This chain is Kynurenine 3-monooxygenase, found in Chaetomium globosum (strain ATCC 6205 / CBS 148.51 / DSM 1962 / NBRC 6347 / NRRL 1970) (Soil fungus).